The following is a 525-amino-acid chain: 2,3-bisphosphoglycerate-independent phosphoglycerate mutase (525 aa).

Mn(2+) contacts are provided by aspartate 18 and serine 68. Residue serine 68 is the Phosphoserine intermediate of the active site. Residues histidine 129, 159–160 (RD), arginine 194, arginine 200, 269–272 (RADR), and lysine 345 each bind substrate. Residues aspartate 413, histidine 417, aspartate 454, histidine 455, and histidine 473 each contribute to the Mn(2+) site.

The protein belongs to the BPG-independent phosphoglycerate mutase family. Monomer. Requires Mn(2+) as cofactor.

It carries out the reaction (2R)-2-phosphoglycerate = (2R)-3-phosphoglycerate. Its pathway is carbohydrate degradation; glycolysis; pyruvate from D-glyceraldehyde 3-phosphate: step 3/5. In terms of biological role, catalyzes the interconversion of 2-phosphoglycerate and 3-phosphoglycerate. The polypeptide is 2,3-bisphosphoglycerate-independent phosphoglycerate mutase (Chromohalobacter salexigens (strain ATCC BAA-138 / DSM 3043 / CIP 106854 / NCIMB 13768 / 1H11)).